Consider the following 238-residue polypeptide: Large ribosomal subunit protein uL2 (238 aa).

The span at 1 to 11 (MGKRLISQNRG) shows a compositional bias: polar residues. Disordered regions lie at residues 1 to 22 (MGKR…APSH) and 202 to 223 (FGGG…APPG).

It belongs to the universal ribosomal protein uL2 family. As to quaternary structure, part of the 50S ribosomal subunit. Forms a bridge to the 30S subunit in the 70S ribosome.

Its function is as follows. One of the primary rRNA binding proteins. Required for association of the 30S and 50S subunits to form the 70S ribosome, for tRNA binding and peptide bond formation. It has been suggested to have peptidyltransferase activity; this is somewhat controversial. Makes several contacts with the 16S rRNA in the 70S ribosome. The chain is Large ribosomal subunit protein uL2 from Methanosarcina acetivorans (strain ATCC 35395 / DSM 2834 / JCM 12185 / C2A).